The sequence spans 396 residues: uncharacterized protein (396 aa).

[4Fe-4S] cluster is bound by residues cysteine 8, cysteine 14, cysteine 17, and cysteine 95. S-adenosyl-L-methionine-binding residues include glutamine 229, tyrosine 258, glutamate 279, and aspartate 325. Cysteine 352 functions as the Nucleophile in the catalytic mechanism.

Belongs to the class I-like SAM-binding methyltransferase superfamily. RNA M5U methyltransferase family.

This is an uncharacterized protein from Chlamydia trachomatis serovar D (strain ATCC VR-885 / DSM 19411 / UW-3/Cx).